We begin with the raw amino-acid sequence, 471 residues long: Ribulose bisphosphate carboxylase large chain 2 (471 aa).

2 residues coordinate substrate: Asn-116 and Thr-166. The Proton acceptor role is filled by Lys-168. Lys-170 contributes to the substrate binding site. The Mg(2+) site is built by Lys-194, Asp-196, and Glu-197. Lys-194 is subject to N6-carboxylysine. The active-site Proton acceptor is His-287. Substrate is bound by residues Arg-288, His-320, and Ser-372.

The protein belongs to the RuBisCO large chain family. Type I subfamily. As to quaternary structure, heterohexadecamer of 8 large chains and 8 small chains. Mg(2+) serves as cofactor.

It is found in the carboxysome. The enzyme catalyses 2 (2R)-3-phosphoglycerate + 2 H(+) = D-ribulose 1,5-bisphosphate + CO2 + H2O. It catalyses the reaction D-ribulose 1,5-bisphosphate + O2 = 2-phosphoglycolate + (2R)-3-phosphoglycerate + 2 H(+). Its function is as follows. RuBisCO catalyzes two reactions: the carboxylation of D-ribulose 1,5-bisphosphate, the primary event in carbon dioxide fixation, as well as the oxidative fragmentation of the pentose substrate. Both reactions occur simultaneously and in competition at the same active site. This Hydrogenovibrio marinus protein is Ribulose bisphosphate carboxylase large chain 2.